A 1033-amino-acid chain; its full sequence is MEIQTAESNVICSIDIFESLSDSVDVAKKLVEKSQESNEAESTTDLRSIEAGFEGVVKQMGETLQSIPESTFDEEEYIGVVIQSLSNEMQNATIGDGSKSEMINNGQQKISAKHTPDIVSEQMEEDLYPTDPEFSYESYMMYSESQSQMTDIPDIPSKSTDVSRQRKHGNHSESQSLVTEIPDIPSQSTNVSSQRKHGNLSKSQSQSTEIPDIPSQSSNASSQRKYGNLSESLSMLPQVTQFMEPPYQAFICPLTKEIMEDPVTTETGVTCERQAVIEWFDSFGNSDEINCPVTGQKLTTELSANVVLKTIIQEWKVRNEAARIKVAHAALSLGGSESMVIDALRDLQMTCEGKEYNKVQVREAGIIQLLDRYLTYRSKDVRFELLKFLRTLADEETDDGKEMIVKTITMSCVIKLLGSSHQPVRHAAQALLLELSKSQHACEKIGTARGAILMLVTAKYNRELDSFASETSDQILRNLEKCPENIKQMAESGLLEPLLGHLAEGSEETQVAMAAYLVEIDIGHEKKTYVAEKACPALIGLVQSENIDARRAAFKALAHISLYHPNNKILVEVGIIKIMVEEMFTKRVFSDLMNSRNEAATILANILESGLEHETFEVNTHGHTLGSDYFVYNIIHMLKNSSPDDLNIDLIRILLSLSKSPRAMATIVSVIKETDASFAMIELINNPHDELGVGALKLLIALTPYIGHTLSERLCKTRGQPENLIQCPVEANQITEKHAVSAKLLAKLPHQNLTLNLALVNESIVSEILHAIHLIQRSGARTSRYATDFLEGLVGILVRFTTTLYEPQMMYLARNHDLTSVFVDLLMKTSSDEVQRLSATGLENLSSTTMTLSRPPQPRSTKFMGSLSMPRSFSLRSSKKKQIEICAIHRGVCSAKNTFCLVEANAITKLLACLQSDKVEVVESALAAICTLLDDKVEVEKSLSMLSEMNAVQLILNAVKEHKKESLLQKAFWMIDKFIIRGGDKYASEISQDRMLSGMLVSAFHRGDGNTRQMAENILRRLDKMPSFSTYIT.

Positions 145 to 226 (SQSQMTDIPD…SSNASSQRKY (82 aa)) are disordered. The segment covering 200 to 226 (LSKSQSQSTEIPDIPSQSSNASSQRKY) has biased composition (polar residues). Residues 245–322 (PPYQAFICPL…QEWKVRNEAA (78 aa)) form the U-box domain. ARM repeat units lie at residues 483–522 (PENI…EIDI), 523–562 (GHEK…HISL), 564–608 (HPNN…NILE), 610–659 (GLEH…SLSK), and 665–704 (ATIV…ALTP).

It carries out the reaction S-ubiquitinyl-[E2 ubiquitin-conjugating enzyme]-L-cysteine + [acceptor protein]-L-lysine = [E2 ubiquitin-conjugating enzyme]-L-cysteine + N(6)-ubiquitinyl-[acceptor protein]-L-lysine.. It participates in protein modification; protein ubiquitination. In terms of biological role, functions as an E3 ubiquitin ligase. The sequence is that of Putative U-box domain-containing protein 42 (PUB42) from Arabidopsis thaliana (Mouse-ear cress).